The sequence spans 122 residues: Small ribosomal subunit protein uS13 (122 aa).

The tract at residues 94 to 122 is disordered; it reads KGLPVRGQRTHTNARTRKGPRRAIAGKKK.

Belongs to the universal ribosomal protein uS13 family. As to quaternary structure, part of the 30S ribosomal subunit. Forms a loose heterodimer with protein S19. Forms two bridges to the 50S subunit in the 70S ribosome.

Functionally, located at the top of the head of the 30S subunit, it contacts several helices of the 16S rRNA. In the 70S ribosome it contacts the 23S rRNA (bridge B1a) and protein L5 of the 50S subunit (bridge B1b), connecting the 2 subunits; these bridges are implicated in subunit movement. Contacts the tRNAs in the A and P-sites. The chain is Small ribosomal subunit protein uS13 from Syntrophus aciditrophicus (strain SB).